Here is a 179-residue protein sequence, read N- to C-terminus: Adenine phosphoribosyltransferase (179 aa).

Belongs to the purine/pyrimidine phosphoribosyltransferase family. As to quaternary structure, homodimer.

The protein resides in the cytoplasm. The enzyme catalyses AMP + diphosphate = 5-phospho-alpha-D-ribose 1-diphosphate + adenine. The protein operates within purine metabolism; AMP biosynthesis via salvage pathway; AMP from adenine: step 1/1. Its function is as follows. Catalyzes a salvage reaction resulting in the formation of AMP, that is energically less costly than de novo synthesis. The protein is Adenine phosphoribosyltransferase of Helicobacter pylori (strain J99 / ATCC 700824) (Campylobacter pylori J99).